The following is a 126-amino-acid chain: Flagellar protein FliT (126 aa).

Positions 1 to 50 (MASPHRLLKDYQQLLSLSQKILHLAVNGQWDTLVEQEIVYVQSVEGLVNT) are required for homodimerization. The tract at residues 60 to 98 (MRLHLRQILQEVMDNEAKVKQLLQKRMDELSSLMGQSLK) is fliD binding.

It belongs to the FliT family. In terms of assembly, homodimer. Interacts with FliD and FlhC.

The protein resides in the cytoplasm. It localises to the cytosol. Functionally, dual-function protein that regulates the transcription of class 2 flagellar operons and that also acts as an export chaperone for the filament-capping protein FliD. As a transcriptional regulator, acts as an anti-FlhDC factor; it directly binds FlhC, thus inhibiting the binding of the FlhC/FlhD complex to class 2 promoters, resulting in decreased expression of class 2 flagellar operons. As a chaperone, effects FliD transition to the membrane by preventing its premature polymerization, and by directing it to the export apparatus. This is Flagellar protein FliT from Pectobacterium carotovorum subsp. carotovorum (strain PC1).